Reading from the N-terminus, the 351-residue chain is Phosphoribosylformylglycinamidine cyclo-ligase (351 aa).

It belongs to the AIR synthase family.

The protein localises to the cytoplasm. It carries out the reaction 2-formamido-N(1)-(5-O-phospho-beta-D-ribosyl)acetamidine + ATP = 5-amino-1-(5-phospho-beta-D-ribosyl)imidazole + ADP + phosphate + H(+). The protein operates within purine metabolism; IMP biosynthesis via de novo pathway; 5-amino-1-(5-phospho-D-ribosyl)imidazole from N(2)-formyl-N(1)-(5-phospho-D-ribosyl)glycinamide: step 2/2. This chain is Phosphoribosylformylglycinamidine cyclo-ligase, found in Lysinibacillus sphaericus (strain C3-41).